Reading from the N-terminus, the 214-residue chain is Adenylate kinase (214 aa).

Residue 10–15 (GAGKGT) coordinates ATP. The interval 30–59 (STGDMLRAAVKAGSELGLKAKEIMDAGKLV) is NMP. AMP contacts are provided by residues T31, R36, 57–59 (KLV), 85–88 (GFPR), and Q92. The LID stretch occupies residues 122–159 (GRRVHAASGRVYHVKFNPPKVEDKDDVTGEELTIRKDD). ATP is bound by residues R123 and 132–133 (VY). Residues R156 and R167 each coordinate AMP. Residue R200 participates in ATP binding.

It belongs to the adenylate kinase family. Monomer.

It localises to the cytoplasm. The catalysed reaction is AMP + ATP = 2 ADP. Its pathway is purine metabolism; AMP biosynthesis via salvage pathway; AMP from ADP: step 1/1. Functionally, catalyzes the reversible transfer of the terminal phosphate group between ATP and AMP. Plays an important role in cellular energy homeostasis and in adenine nucleotide metabolism. The sequence is that of Adenylate kinase from Yersinia pseudotuberculosis serotype O:1b (strain IP 31758).